Here is a 396-residue protein sequence, read N- to C-terminus: Metallophosphoesterase 1 (396 aa).

A helical membrane pass occupies residues 27 to 47 (IAVVFAVLLFCEFLIYYLAIF). The a divalent metal cation site is built by aspartate 77, aspartate 119, asparagine 157, histidine 249, histidine 303, and histidine 305. Residues 356–376 (VVLVIYCGAVGFLVVLTLSHL) form a helical membrane-spanning segment. Residues 392–396 (KRKTR) carry the Di-lysine motif motif.

This sequence belongs to the metallophosphoesterase superfamily. MPPE1 family. As to quaternary structure, interacts with GPI-anchor proteins (via the GPI portion). Interacts with TMED10. The cofactor is Mn(2+).

Its subcellular location is the endoplasmic reticulum-Golgi intermediate compartment membrane. Functionally, metallophosphoesterase that catalyzes the removal of a side-chain ethanolamine-phosphate (EtNP) from the second mannose of the GPI-anchor protein intermediate. Participates in the glycan remodeling steps of GPI-anchor maturation to allow an efficient transport of GPI-anchor proteins from the endoplasmic reticulum to the Golgi. The polypeptide is Metallophosphoesterase 1 (Macaca fascicularis (Crab-eating macaque)).